A 311-amino-acid polypeptide reads, in one-letter code: Transcriptional repressor scratch 2 (311 aa).

Residues 1-20 (MPRSFLVKKIKADGFQCSGV) are SNAG domain. 2 disordered regions span residues 71 to 90 (PAYPAAASEEYSDPESPQSS) and 120 to 156 (RRRAGAGGDAAGAGDAGGGGGGGGGGERAGRSGATAG). Over residues 124 to 146 (GAGGDAAGAGDAGGGGGGGGGGE) the composition is skewed to gly residues. 4 consecutive C2H2-type zinc fingers follow at residues 161–183 (HACAECGKTYATSSNLSRHKQTH), 192–214 (RKCPTCGKAYVSMPALAMHVLTH), 218–240 (HKCGVCGKAFSRPWLLQGHMRSH), and 246–268 (FGCAHCGKAFADRSNLRAHMQTH). A C2H2-type 5; atypical zinc finger spans residues 274–297 (YRCRQCDKSFALKSYLHKHCEAAC).

It belongs to the snail C2H2-type zinc-finger protein family.

It is found in the nucleus. May be involved in transcriptional regulation. This Mus musculus (Mouse) protein is Transcriptional repressor scratch 2 (Scrt2).